Consider the following 427-residue polypeptide: Peptidase B (427 aa).

Residues lysine 195 and aspartate 200 each coordinate Mn(2+). Lysine 207 is an active-site residue. Residues aspartate 218, aspartate 277, and glutamate 279 each coordinate Mn(2+). The active site involves arginine 281.

Belongs to the peptidase M17 family. In terms of assembly, homohexamer. Requires Mn(2+) as cofactor.

Its subcellular location is the cytoplasm. The enzyme catalyses Release of an N-terminal amino acid, Xaa, from a peptide or arylamide. Xaa is preferably Glu or Asp but may be other amino acids, including Leu, Met, His, Cys and Gln.. Its function is as follows. Probably plays an important role in intracellular peptide degradation. This Escherichia coli O7:K1 (strain IAI39 / ExPEC) protein is Peptidase B.